The following is a 269-amino-acid chain: Formamidopyrimidine-DNA glycosylase (269 aa).

Pro-2 functions as the Schiff-base intermediate with DNA in the catalytic mechanism. Glu-3 (proton donor) is an active-site residue. Lys-57 acts as the Proton donor; for beta-elimination activity in catalysis. Residues His-90, Arg-109, and Arg-150 each contribute to the DNA site. The segment at 235–269 adopts an FPG-type zinc-finger fold; that stretch reads QVYGRAGEACLTCGTTIKRSKHGQRTTFYCPHCQR. Catalysis depends on Arg-259, which acts as the Proton donor; for delta-elimination activity.

This sequence belongs to the FPG family. In terms of assembly, monomer. It depends on Zn(2+) as a cofactor.

The catalysed reaction is Hydrolysis of DNA containing ring-opened 7-methylguanine residues, releasing 2,6-diamino-4-hydroxy-5-(N-methyl)formamidopyrimidine.. The enzyme catalyses 2'-deoxyribonucleotide-(2'-deoxyribose 5'-phosphate)-2'-deoxyribonucleotide-DNA = a 3'-end 2'-deoxyribonucleotide-(2,3-dehydro-2,3-deoxyribose 5'-phosphate)-DNA + a 5'-end 5'-phospho-2'-deoxyribonucleoside-DNA + H(+). Functionally, involved in base excision repair of DNA damaged by oxidation or by mutagenic agents. Acts as a DNA glycosylase that recognizes and removes damaged bases. Has a preference for oxidized purines, such as 7,8-dihydro-8-oxoguanine (8-oxoG). Has AP (apurinic/apyrimidinic) lyase activity and introduces nicks in the DNA strand. Cleaves the DNA backbone by beta-delta elimination to generate a single-strand break at the site of the removed base with both 3'- and 5'-phosphates. This chain is Formamidopyrimidine-DNA glycosylase, found in Edwardsiella ictaluri (strain 93-146).